The sequence spans 446 residues: Glycogen synthase (446 aa).

R15 is an ADP-alpha-D-glucose binding site.

This sequence belongs to the glycosyltransferase 1 family. Bacterial/plant glycogen synthase subfamily.

The catalysed reaction is [(1-&gt;4)-alpha-D-glucosyl](n) + ADP-alpha-D-glucose = [(1-&gt;4)-alpha-D-glucosyl](n+1) + ADP + H(+). It functions in the pathway glycan biosynthesis; glycogen biosynthesis. Synthesizes alpha-1,4-glucan chains using ADP-glucose. The protein is Glycogen synthase of Deinococcus deserti (strain DSM 17065 / CIP 109153 / LMG 22923 / VCD115).